The following is a 283-amino-acid chain: Probable replication-associated protein repA1 (283 aa).

The protein belongs to the IncFII RepA family.

Its function is as follows. This protein is essential for plasmid replication; it is involved in copy control functions. The protein is Probable replication-associated protein repA1 (repA1) of Buchnera aphidicola subsp. Acyrthosiphon pisum (strain APS) (Acyrthosiphon pisum symbiotic bacterium).